Here is a 115-residue protein sequence, read N- to C-terminus: Selenoprotein K homolog (115 aa).

The chain crosses the membrane as a helical span at residues 29–49 (FIWGILNQITFFFSTLIGGTV). Residues 48-115 (TVEPRRRPNN…NSASGSUGPK (68 aa)) are disordered. Residues 58 to 84 (QGGGRRLAGFDGNGNVTGGSGVGGSGP) show a composition bias toward gly residues. Positions 104–115 (ACNSASGSUGPK) are enriched in polar residues. Position 112 (Sec-112) is a non-standard amino acid, selenocysteine.

It belongs to the selenoprotein K family.

It localises to the membrane. This is Selenoprotein K homolog (selk) from Dictyostelium discoideum (Social amoeba).